Consider the following 729-residue polypeptide: DNA topoisomerase 3 (729 aa).

Residues 3 to 136 (KKAVLAEKPS…VKRLWISSVT (134 aa)) form the Toprim domain. The Mg(2+) site is built by glutamate 9 and aspartate 105. A Topo IA-type catalytic domain is found at 153–590 (YETLYAAAAA…EMKEYAKAVV (438 aa)). Residues 187-192 (SCGRVQ) form an interaction with DNA region. Catalysis depends on tyrosine 311, which acts as the O-(5'-phospho-DNA)-tyrosine intermediate. The interval 680 to 708 (FEQRRKQNKHKNVSKREVQSYMKKQNKQD) is disordered.

It belongs to the type IA topoisomerase family. The cofactor is Mg(2+).

It catalyses the reaction ATP-independent breakage of single-stranded DNA, followed by passage and rejoining.. In terms of biological role, releases the supercoiling and torsional tension of DNA, which is introduced during the DNA replication and transcription, by transiently cleaving and rejoining one strand of the DNA duplex. Introduces a single-strand break via transesterification at a target site in duplex DNA. The scissile phosphodiester is attacked by the catalytic tyrosine of the enzyme, resulting in the formation of a DNA-(5'-phosphotyrosyl)-enzyme intermediate and the expulsion of a 3'-OH DNA strand. The free DNA strand then undergoes passage around the unbroken strand, thus removing DNA supercoils. Finally, in the religation step, the DNA 3'-OH attacks the covalent intermediate to expel the active-site tyrosine and restore the DNA phosphodiester backbone. The polypeptide is DNA topoisomerase 3 (Shouchella clausii (strain KSM-K16) (Alkalihalobacillus clausii)).